We begin with the raw amino-acid sequence, 348 residues long: MPHIDNDVKLDFKDVLLRPKRSTLKSRSEVDLTRSFAFRNSKQMYTGIPIIAANMDTVGTFEMAKVLCKFSLFTAVHKHYSLEQWKEFASQNPDCLEHLAASSGTGSSDFEQLEQILNAIPQVKYVCLDVANGYSEHFVEFVKDVRKRFPEHTIMAGNVVTGEMVEELILSGADIIKVGIGPGSVCTTRKKTGVGYPQLSAVMECADAAHGLKGHIISDGGCSCPGDVAKAFGAGADFVMLGGMLAGHSESGGELIERNGRKYKLFYGMSSEMAMKKYAGGVAEYRASEGKTVEVPFKGDVEHTIRDIIGGIRSTCTYVGAAKQKELSRRTTFIRVTQQVKPIFSDES.

Residues 26–27 (SR), lysine 78, 129–131 (DVA), and 180–181 (IG) each bind NADP(+). Residues glycine 181, glycine 183, and cysteine 186 each coordinate K(+). Cysteine 186 serves as the catalytic Thioimidate intermediate. The active-site Proton donor/acceptor is the threonine 188. Residue arginine 189 coordinates K(+). GMP contacts are provided by residues 219–221 (DGG), 242–243 (GG), 268–270 (GMS), and 286–290 (RASEG). Residues methionine 269 and 285-286 (YR) each bind NADP(+). An N6-acetyllysine modification is found at lysine 291. 314–317 (STCT) is an NADP(+) binding site.

It belongs to the IMPDH/GMPR family. GuaC type 1 subfamily. As to quaternary structure, homotetramer.

It carries out the reaction IMP + NH4(+) + NADP(+) = GMP + NADPH + 2 H(+). Functionally, catalyzes the irreversible NADPH-dependent deamination of GMP to IMP. It functions in the conversion of nucleobase, nucleoside and nucleotide derivatives of G to A nucleotides, and in maintaining the intracellular balance of A and G nucleotides. Plays a role in modulating cellular differentiation. This Bos taurus (Bovine) protein is GMP reductase 2.